We begin with the raw amino-acid sequence, 627 residues long: tRNA uridine 5-carboxymethylaminomethyl modification enzyme MnmG (627 aa).

Residues 13-18 (GGGHAG), valine 125, and serine 180 contribute to the FAD site. Residue 274–288 (GPRYCPSIEDKVVRF) coordinates NAD(+). Glutamine 371 is a binding site for FAD.

The protein belongs to the MnmG family. As to quaternary structure, homodimer. Heterotetramer of two MnmE and two MnmG subunits. FAD is required as a cofactor.

It localises to the cytoplasm. In terms of biological role, NAD-binding protein involved in the addition of a carboxymethylaminomethyl (cmnm) group at the wobble position (U34) of certain tRNAs, forming tRNA-cmnm(5)s(2)U34. The protein is tRNA uridine 5-carboxymethylaminomethyl modification enzyme MnmG of Francisella tularensis subsp. tularensis (strain WY96-3418).